Consider the following 1054-residue polypeptide: Kinesin-like protein KIN-7G (1054 aa).

The Kinesin motor domain occupies 17–341; sequence KIFVSVRLRP…LLFASCAKEV (325 aa). ATP is bound at residue 105-112; sequence GQTSSGKT. Coiled-coil stretches lie at residues 350–425 and 611–640; these read VMSD…IGEA and TETAEEKEEKEETEEKEEEEEERVKEVSSV. Disordered regions lie at residues 600 to 648 and 740 to 760; these read CEPE…KEKS and ERAESNLKPSNSKRPPLPKHI. The span at 613-631 shows a compositional bias: acidic residues; the sequence is TAEEKEEKEETEEKEEEEE.

This sequence belongs to the TRAFAC class myosin-kinesin ATPase superfamily. Kinesin family. KIN-7 subfamily.

This chain is Kinesin-like protein KIN-7G, found in Arabidopsis thaliana (Mouse-ear cress).